The primary structure comprises 308 residues: Olfactory receptor 4E2 (308 aa).

Topologically, residues 1 to 24 (MGALNQTRVTEFIFLGLTDNWVLE) are extracellular. An N-linked (GlcNAc...) asparagine glycan is attached at asparagine 5. The helical transmembrane segment at 25–45 (ILFFVPFTVTYMLTLLGNFLI) threads the bilayer. The Cytoplasmic segment spans residues 46–57 (VVTIVFTPRLHN). Residues 58 to 78 (PMYFFLSNLSFIDICHSSVTV) form a helical membrane-spanning segment. At 79–97 (PKMLEGLLLERKTISFDNC) the chain is on the extracellular side. A disulfide bond links cysteine 97 and cysteine 179. The helical transmembrane segment at 98 to 118 (IAQLFFLHLFACSEIFLLTIM) threads the bilayer. 2 residues coordinate Cu cation: histidine 105 and cysteine 109. Residues 119-143 (AYDRYVAICIPLHYSNVMNMKVCVQ) are Cytoplasmic-facing. A helical transmembrane segment spans residues 144 to 164 (LVFALWLGGTIHSLVQTFLTI). At 165–204 (RLPYCGPNIIDSYFCDVPPVIKLACTDTYLTGILIVSNSG) the chain is on the extracellular side. The helical transmembrane segment at 205 to 225 (TISLVCFLALVTSYTVILFSL) threads the bilayer. The Cytoplasmic segment spans residues 226–236 (RKQSAEGRRKA). The chain crosses the membrane as a helical span at residues 237–257 (LSTCSAHFMVVALFFGPCIFL). Residues 258-268 (YTRPDSSFSID) are Extracellular-facing. A Cu cation-binding site is contributed by arginine 260. A helical membrane pass occupies residues 269–289 (KVVSVFYTVVTPLLNPLIYTL). Residues 290-308 (RNEEVKTAMKHLRQRRICS) lie on the Cytoplasmic side of the membrane.

The protein belongs to the G-protein coupled receptor 1 family. Expressed in olfactory epithelium, specifically in the olfactory sensory neurons of the septal organ.

It is found in the cell membrane. With respect to regulation, copper binding enhances receptor activity in response to odorant binding. Olfactory receptor that is activated by the binding of organosulfur odorants with thioether groups such as (methylthio)methanethiol (MTMT) and bis(methylthiomethyl) disulfide. Also binds odorants cis-cyclooctene and tert-butyl mercaptan. The activity of this receptor is mediated by G proteins which activate adenylyl cyclase (Potential). The chain is Olfactory receptor 4E2 from Mus musculus (Mouse).